Reading from the N-terminus, the 296-residue chain is Ribosomal RNA small subunit methyltransferase A (296 aa).

S-adenosyl-L-methionine contacts are provided by Asn-31, Leu-33, Gly-58, Glu-79, Asp-111, and Asn-136.

The protein belongs to the class I-like SAM-binding methyltransferase superfamily. rRNA adenine N(6)-methyltransferase family. RsmA subfamily.

The protein localises to the cytoplasm. The enzyme catalyses adenosine(1518)/adenosine(1519) in 16S rRNA + 4 S-adenosyl-L-methionine = N(6)-dimethyladenosine(1518)/N(6)-dimethyladenosine(1519) in 16S rRNA + 4 S-adenosyl-L-homocysteine + 4 H(+). In terms of biological role, specifically dimethylates two adjacent adenosines (A1518 and A1519) in the loop of a conserved hairpin near the 3'-end of 16S rRNA in the 30S particle. May play a critical role in biogenesis of 30S subunits. This is Ribosomal RNA small subunit methyltransferase A from Lactobacillus johnsonii (strain CNCM I-12250 / La1 / NCC 533).